Reading from the N-terminus, the 854-residue chain is Probable disease resistance protein At1g51480 (854 aa).

Residues 25-62 (RNYIHKMEANLDDLHTTMEELKNGRDDLLRRVSIEEDK) adopt a coiled-coil conformation. The NB-ARC domain occupies 138 to 441 (AHKIPVPKVE…CEGYINPNRY (304 aa)). 180-187 (GMGGVGKT) contributes to the ATP binding site. LRR repeat units lie at residues 514–535 (IVRQ…SKCS), 536–557 (NLST…FFLF), 560–582 (KLVV…ISNL), 584–605 (SLQY…MKKL), 607–629 (KLIY…SATL), and 631–652 (NLQV…MEEL).

Belongs to the disease resistance NB-LRR family.

Its function is as follows. Probable disease resistance protein. The sequence is that of Probable disease resistance protein At1g51480 from Arabidopsis thaliana (Mouse-ear cress).